The following is a 238-amino-acid chain: MPEKLAKAIANPLFPALDSLLRSGRHIASEDLDNHALLCEFEHELGMFYQRYHAELVKAPEGFFYLRPRSTSLIARSVLAEVDMLVGKVLCFLYLSPERLAHEGIFTNQELFDELLVLADEQKLMKLVTNRASGSDLDKEKLFDKVRTSLRRLKRLGMIIQVGEQGKFRISEAVFRFGADVRSNDDMKEAQLRLIRDGEAVVVHNEESSQSSFDLDENEKLSDISAEEQHELELEGDA.

The tract at residues 206–238 (EESSQSSFDLDENEKLSDISAEEQHELELEGDA) is disordered. A compositionally biased stretch (basic and acidic residues) spans 218-238 (NEKLSDISAEEQHELELEGDA).

The protein belongs to the MukE family. As to quaternary structure, interacts, and probably forms a ternary complex, with MukF and MukB. The complex formation is stimulated by calcium or magnesium.

It is found in the cytoplasm. Its subcellular location is the nucleoid. Functionally, involved in chromosome condensation, segregation and cell cycle progression. May participate in facilitating chromosome segregation by condensation DNA from both sides of a centrally located replisome during cell division. Probably acts via its interaction with MukB and MukF. This is Chromosome partition protein MukE from Aliivibrio salmonicida (strain LFI1238) (Vibrio salmonicida (strain LFI1238)).